Consider the following 403-residue polypeptide: Acetate kinase (403 aa).

Asn-8 provides a ligand contact to Mg(2+). Lys-15 contributes to the ATP binding site. Arg-90 is a binding site for substrate. The active-site Proton donor/acceptor is the Asp-147. ATP-binding positions include 207–211, 282–284, and 330–334; these read HLGSG, DLR, and GVGEN. Glu-384 contributes to the Mg(2+) binding site.

It belongs to the acetokinase family. As to quaternary structure, homodimer. Mg(2+) serves as cofactor. It depends on Mn(2+) as a cofactor.

Its subcellular location is the cytoplasm. The enzyme catalyses acetate + ATP = acetyl phosphate + ADP. The protein operates within metabolic intermediate biosynthesis; acetyl-CoA biosynthesis; acetyl-CoA from acetate: step 1/2. Catalyzes the formation of acetyl phosphate from acetate and ATP. Can also catalyze the reverse reaction. The polypeptide is Acetate kinase (Exiguobacterium sibiricum (strain DSM 17290 / CCUG 55495 / CIP 109462 / JCM 13490 / 255-15)).